The primary structure comprises 627 residues: uncharacterized protein (627 aa).

Disordered stretches follow at residues 441–466 (EAVP…QGEN) and 608–627 (DLRG…TEDR). Residues 615 to 627 (DYERGKGESTEDR) show a composition bias toward basic and acidic residues.

This is an uncharacterized protein from Homo sapiens (Human).